Consider the following 104-residue polypeptide: UPF0145 protein RD1_2695 (104 aa).

This sequence belongs to the UPF0145 family.

The sequence is that of UPF0145 protein RD1_2695 from Roseobacter denitrificans (strain ATCC 33942 / OCh 114) (Erythrobacter sp. (strain OCh 114)).